A 366-amino-acid polypeptide reads, in one-letter code: DNA-directed RNA polymerase II subunit GRINL1A (366 aa).

The disordered stretch occupies residues 1 to 23 (MFSLPRGFEPPAPEDLGRQSSAE). Residues 15 to 39 (DLGRQSSAELRERLRRQERLLRNEK) adopt a coiled-coil conformation. The important for transcription repressor activity stretch occupies residues 29-68 (RRQERLLRNEKFICKLPDKGKKISDTVAKLKAAISEREEV). Disordered regions lie at residues 88–140 (ATTR…HRGN), 158–182 (IRAR…QEEE), 201–225 (ADQS…ETPK), and 237–280 (ARNP…RRAR). Positions 90–100 (TRADTDVDKAQ) are enriched in basic and acidic residues. The span at 101–127 (SSDLMLDTSSLDPDCSSIDIKSSKSTS) shows a compositional bias: low complexity. The interval 225–296 (KKPHYMKVLE…TAARLLPLHH (72 aa)) is interaction with Pol II. The segment covering 251–272 (VLPTQQSDSPSHCQRGQSPASS) has biased composition (polar residues). Serine 268 is subject to Phosphoserine. The tract at residues 297–312 (LPAQLLSIEESLALQR) is important for transcription repressor activity. The stretch at 299 to 333 (AQLLSIEESLALQREQKQNYEEMQAKLAAQKLAER) forms a coiled coil. The interaction with Pol II stretch occupies residues 313 to 338 (EQKQNYEEMQAKLAAQKLAERLNIKM). The interval 338–366 (MQSYNPEGESSGRYREVRDEADAQSSDEC) is disordered. Residues 347 to 358 (SSGRYREVRDEA) show a composition bias toward basic and acidic residues.

Belongs to the GRINL1 family. Component of the Pol II(G) complex, which contains the RNA polymerase II (Pol II) core complex subunits and POLR2M isoform 1. Pol II(G) appears to be an abundant form of Pol II. Post-translationally, dephosphorylated at Ser-268 by the PNUTS-PP1 complex, promoting RNA polymerase II transcription pause-release.

The protein localises to the nucleus. Its function is as follows. Appears to be a stable component of the Pol II(G) complex form of RNA polymerase II (Pol II). Pol II synthesizes mRNA precursors and many functional non-coding RNAs and is the central component of the basal RNA polymerase II transcription machinery. May play a role in the Mediator complex-dependent regulation of transcription activation. Acts as a negative regulator of transcriptional activation; this repression is relieved by the Mediator complex, which restores Pol II(G) activator-dependent transcription to a level equivalent to that of Pol II. The polypeptide is DNA-directed RNA polymerase II subunit GRINL1A (Polr2m) (Mus musculus (Mouse)).